The chain runs to 144 residues: 3-dehydroquinate dehydratase (144 aa).

The active-site Proton acceptor is the Tyr-22. Substrate is bound by residues Asn-73, His-79, and Asp-86. His-99 functions as the Proton donor in the catalytic mechanism. Substrate-binding positions include Leu-100–Ser-101 and Arg-110.

This sequence belongs to the type-II 3-dehydroquinase family. As to quaternary structure, homododecamer.

It carries out the reaction 3-dehydroquinate = 3-dehydroshikimate + H2O. Its pathway is metabolic intermediate biosynthesis; chorismate biosynthesis; chorismate from D-erythrose 4-phosphate and phosphoenolpyruvate: step 3/7. Functionally, catalyzes a trans-dehydration via an enolate intermediate. This Herpetosiphon aurantiacus (strain ATCC 23779 / DSM 785 / 114-95) protein is 3-dehydroquinate dehydratase.